Reading from the N-terminus, the 928-residue chain is Neuropilin-1 (928 aa).

Positions 1 to 21 (MLLRLLSCCCWLLCSLRSSWA) are cleaved as a signal peptide. At 22–860 (SRNDKCGDTI…PGNVLKTLDP (839 aa)) the chain is on the extracellular side. Intrachain disulfides connect Cys27-Cys54, Cys82-Cys104, and Cys147-Cys173. CUB domains follow at residues 27–141 (CGDT…YEVF) and 147–265 (CSRN…FSVV). Asn150 carries an N-linked (GlcNAc...) asparagine glycan. Ca(2+) is bound by residues Glu195, Asp209, and Asp250. A disulfide bond links Cys206 and Cys228. 3 N-linked (GlcNAc...) asparagine glycosylation sites follow: Asn261, Asn300, and Asn523. 2 disulfide bridges follow: Cys275/Cys424 and Cys431/Cys584. F5/8 type C domains follow at residues 275–424 (CKEA…LYGC) and 431–584 (CSRM…LLGC). Residue Ser613 is glycosylated (O-linked (Xyl...) (chondroitin sulfate) serine; alternate). Ser613 carries an O-linked (Xyl...) (heparan sulfate) serine; alternate glycan. The interval 624–645 (GATGQSTETPTVEASPEEPDMT) is disordered. Polar residues predominate over residues 625 to 635 (ATGQSTETPTV). The 167-residue stretch at 646 to 812 (HSDLDCKFGW…NHISPSQCRA (167 aa)) folds into the MAM domain. Ser834 is a glycosylation site (O-linked (Xyl...) (chondroitin sulfate) serine). An N-linked (GlcNAc...) asparagine glycan is attached at Asn844. A helical transmembrane segment spans residues 861 to 883 (ILITIIAMSALGVLLGAICGVVL). Residues 884–928 (YCACWHNGMSERNLSALENYNFELVDGVKLKKDKLNTQNSYSEAS) lie on the Cytoplasmic side of the membrane.

The protein belongs to the neuropilin family. Homodimer, and heterodimer. As to expression, retinal ganglion cells and visual center neurons.

The protein localises to the mitochondrion membrane. It localises to the cell membrane. Its function is as follows. Receptor involved in the development of the cardiovascular system, in angiogenesis, in the formation of certain neuronal circuits and in organogenesis outside the nervous system. Mediates the chemorepulsant activity of semaphorins. Binding to VEGFA initiates a signaling pathway needed for motor neuron axon guidance and cell body migration, including for the caudal migration of facial motor neurons from rhombomere 4 to rhombomere 6 during embryonic development. Regulates mitochondrial iron transport via interaction. The polypeptide is Neuropilin-1 (nrp1) (Xenopus laevis (African clawed frog)).